Consider the following 320-residue polypeptide: Putative membrane-bound redox modulator Alx (320 aa).

Residues 1 to 6 (MNTVGT) lie on the Periplasmic side of the membrane. The chain crosses the membrane as a helical span at residues 7–27 (PLLWGGFAVVVAIMLAIDLLL). Over 28-43 (QGRRGAHAMTMKQAAA) the chain is Cytoplasmic. A helical membrane pass occupies residues 44 to 64 (WSLVWVTLSLLFNAAFWWYLV). Topologically, residues 65–89 (QTEGRAVADPQALAFLTGYLIEKSL) are periplasmic. The chain crosses the membrane as a helical span at residues 90–110 (AVDNVFVWLMLFSYFSVPAAL). The Cytoplasmic segment spans residues 111-113 (QRR). Residues 114–134 (VLVYGVLGAIVLRTIMIFTGS) form a helical membrane-spanning segment. Residue Trp135 is a topological domain, periplasmic. A helical membrane pass occupies residues 136–156 (LISQFDWILYIFGAFLLFTGV). The Cytoplasmic segment spans residues 157–198 (KMALAHEDESGIGDKPLVRWLRGHLRMTDTIDNEHFFVRKNG). A helical membrane pass occupies residues 199-219 (LLYATPLMLVLILVELSDVIF). The Periplasmic portion of the chain corresponds to 220–225 (AVDSIP). The helical transmembrane segment at 226–246 (AIFAVTTDPFIVLTSNLFAIL) threads the bilayer. At 247-261 (GLRAMYFLLAGVAER) the chain is on the cytoplasmic side. The helical transmembrane segment at 262–282 (FSMLKYGLAVILVFIGIKMLI) threads the bilayer. The Periplasmic portion of the chain corresponds to 283–286 (VDFY). A helical membrane pass occupies residues 287 to 307 (HIPIAVSLGVVFGILVMTFII). Over 308–320 (NAWVNYRHDKQRG) the chain is Cytoplasmic.

It belongs to the TerC family.

The protein localises to the cell inner membrane. Its function is as follows. Has been proposed to be a redox modulator. This Shigella flexneri protein is Putative membrane-bound redox modulator Alx (alx).